Here is a 231-residue protein sequence, read N- to C-terminus: Ribonuclease 3 (231 aa).

Positions 5 to 134 constitute an RNase III domain; that stretch reads QEKLKNDYGL…FLGALFIDQG (130 aa). Residue Glu-47 coordinates Mg(2+). Residue Asp-51 is part of the active site. Positions 120 and 123 each coordinate Mg(2+). The active site involves Glu-123. Residues 160-229 enclose the DRBM domain; that stretch reads DYKTELQEVL…AENAIKGQNH (70 aa).

The protein belongs to the ribonuclease III family. As to quaternary structure, homodimer. Requires Mg(2+) as cofactor.

It localises to the cytoplasm. The enzyme catalyses Endonucleolytic cleavage to 5'-phosphomonoester.. In terms of biological role, digests double-stranded RNA. Involved in the processing of primary rRNA transcript to yield the immediate precursors to the large and small rRNAs (23S and 16S). Processes some mRNAs, and tRNAs when they are encoded in the rRNA operon. Processes pre-crRNA and tracrRNA of type II CRISPR loci if present in the organism. The sequence is that of Ribonuclease 3 from Lactococcus lactis subsp. cremoris (strain SK11).